A 460-amino-acid polypeptide reads, in one-letter code: Bifunctional protein GlmU (460 aa).

Residues 1–229 (MTNYAIILAA…FNESLGVNDR (229 aa)) form a pyrophosphorylase region. Residues 8–11 (LAAG), Lys22, Gln72, and 77–78 (GT) each bind UDP-N-acetyl-alpha-D-glucosamine. A Mg(2+)-binding site is contributed by Asp102. Positions 139, 154, 169, and 227 each coordinate UDP-N-acetyl-alpha-D-glucosamine. Residue Asn227 participates in Mg(2+) binding. Residues 230–250 (VALATAETVMRQRITQKHMVN) form a linker region. The segment at 251–460 (GVTFQNPETV…RLAHHPSRSK (210 aa)) is N-acetyltransferase. Residues Arg332 and Lys350 each coordinate UDP-N-acetyl-alpha-D-glucosamine. The active-site Proton acceptor is the His362. 2 residues coordinate UDP-N-acetyl-alpha-D-glucosamine: Tyr365 and Asn376. Acetyl-CoA-binding positions include Ala379, 385–386 (NY), Ser404, Ala422, and Arg439.

This sequence in the N-terminal section; belongs to the N-acetylglucosamine-1-phosphate uridyltransferase family. It in the C-terminal section; belongs to the transferase hexapeptide repeat family. In terms of assembly, homotrimer. Requires Mg(2+) as cofactor.

The protein localises to the cytoplasm. The catalysed reaction is alpha-D-glucosamine 1-phosphate + acetyl-CoA = N-acetyl-alpha-D-glucosamine 1-phosphate + CoA + H(+). It catalyses the reaction N-acetyl-alpha-D-glucosamine 1-phosphate + UTP + H(+) = UDP-N-acetyl-alpha-D-glucosamine + diphosphate. It participates in nucleotide-sugar biosynthesis; UDP-N-acetyl-alpha-D-glucosamine biosynthesis; N-acetyl-alpha-D-glucosamine 1-phosphate from alpha-D-glucosamine 6-phosphate (route II): step 2/2. Its pathway is nucleotide-sugar biosynthesis; UDP-N-acetyl-alpha-D-glucosamine biosynthesis; UDP-N-acetyl-alpha-D-glucosamine from N-acetyl-alpha-D-glucosamine 1-phosphate: step 1/1. It functions in the pathway bacterial outer membrane biogenesis; LPS lipid A biosynthesis. Functionally, catalyzes the last two sequential reactions in the de novo biosynthetic pathway for UDP-N-acetylglucosamine (UDP-GlcNAc). The C-terminal domain catalyzes the transfer of acetyl group from acetyl coenzyme A to glucosamine-1-phosphate (GlcN-1-P) to produce N-acetylglucosamine-1-phosphate (GlcNAc-1-P), which is converted into UDP-GlcNAc by the transfer of uridine 5-monophosphate (from uridine 5-triphosphate), a reaction catalyzed by the N-terminal domain. The protein is Bifunctional protein GlmU of Streptococcus pyogenes serotype M18 (strain MGAS8232).